The primary structure comprises 231 residues: Demethylmenaquinone methyltransferase (231 aa).

S-adenosyl-L-methionine is bound by residues T62, D80, 102–103 (DA), and S119.

It belongs to the class I-like SAM-binding methyltransferase superfamily. MenG/UbiE family.

It carries out the reaction a 2-demethylmenaquinol + S-adenosyl-L-methionine = a menaquinol + S-adenosyl-L-homocysteine + H(+). It participates in quinol/quinone metabolism; menaquinone biosynthesis; menaquinol from 1,4-dihydroxy-2-naphthoate: step 2/2. Functionally, methyltransferase required for the conversion of demethylmenaquinol (DMKH2) to menaquinol (MKH2). The protein is Demethylmenaquinone methyltransferase of Streptomyces avermitilis (strain ATCC 31267 / DSM 46492 / JCM 5070 / NBRC 14893 / NCIMB 12804 / NRRL 8165 / MA-4680).